A 287-amino-acid polypeptide reads, in one-letter code: CRISPR-associated endoribonuclease Cas6 1 (287 aa).

This sequence belongs to the CRISPR-associated endoribonuclease Cas6 family. In terms of assembly, part of the aCascade ribonucleoprotein complex, minimally composed of Csa2 and Cas5a, which binds crRNA. Other possible components of aCascade in strain P1 are Cas6b (SSO1437) and Csa5 (SSO1443), while SSO1399, Cas5b (SSO1400) and SSO1401 have sometimes been seen weakly associated. Csa2 is probably the major RNA-binding subunit. The Csa2-Cas5a-crRNA complex also binds target DNA homologous to crRNA, probably forming an R-loop. Purified aCascade forms a filament about 6 nm in width.

Functionally, CRISPR (clustered regularly interspaced short palindromic repeat) is an adaptive immune system that provides protection against mobile genetic elements (viruses, transposable elements and conjugative plasmids). CRISPR clusters contain spacers, sequences complementary to antecedent mobile elements, and target invading nucleic acids. CRISPR clusters are transcribed and processed into CRISPR RNA (crRNA). This Saccharolobus solfataricus (strain ATCC 35092 / DSM 1617 / JCM 11322 / P2) (Sulfolobus solfataricus) protein is CRISPR-associated endoribonuclease Cas6 1 (cas6a).